The following is a 496-amino-acid chain: uncharacterized protein (496 aa).

Positions 36, 81, 300, 302, 321, 323, and 375 each coordinate Mg(2+).

This sequence belongs to the XPG/RAD2 endonuclease family. FEN1 subfamily. Mg(2+) serves as cofactor.

This is an uncharacterized protein from Schizosaccharomyces pombe (strain 972 / ATCC 24843) (Fission yeast).